The sequence spans 425 residues: Formyl-CoA:oxalate CoA-transferase (425 aa).

CoA is bound by residues 17–18, Arg38, 72–75, 96–98, Arg104, and 136–139; these read QS, LDTK, NFG, and KVYE. Asp168 functions as the Nucleophile in the catalytic mechanism. 247-249 contacts substrate; the sequence is GGQ.

The protein belongs to the CoA-transferase III family. Frc subfamily. In terms of assembly, homodimer.

It catalyses the reaction formyl-CoA + oxalate = oxalyl-CoA + formate. It functions in the pathway metabolic intermediate degradation; oxalate degradation; CO(2) and formate from oxalate: step 1/2. Functionally, involved in the catabolism of oxalate and in the adapatation to low pH via the induction of the oxalate-dependent acid tolerance response (ATR). Catalyzes the transfer of the CoA moiety from formyl-CoA to oxalate. The polypeptide is Formyl-CoA:oxalate CoA-transferase (Rhodopseudomonas palustris (strain HaA2)).